A 158-amino-acid chain; its full sequence is Glycine/sarcosine/betaine reductase complex component A1 (158 aa).

U44 is an active-site residue. U44 is a non-standard amino acid (selenocysteine).

The protein belongs to the GrdA family. In terms of assembly, monomer. Component of the glycine, sarcosine and betaine reductase complexes, together with components B and C.

It carries out the reaction acetyl phosphate + [thioredoxin]-disulfide + NH4(+) + H2O = [thioredoxin]-dithiol + glycine + phosphate + H(+). It catalyses the reaction acetyl phosphate + methylamine + [thioredoxin]-disulfide + H2O = sarcosine + [thioredoxin]-dithiol + phosphate + H(+). The catalysed reaction is acetyl phosphate + trimethylamine + [thioredoxin]-disulfide + H2O = glycine betaine + [thioredoxin]-dithiol + phosphate + H(+). In terms of biological role, in the first step of glycine, betaine and sarcosine reductases, the substrate is bound to component PB via a Schiff base intermediate. Then the PB-activated substrate is nucleophilically attacked by the selenol anion of component PA to transform it to a carboxymethylated selenoether and the respective amine. By action of component PC, acetyl phosphate is formed, leaving component PA in its oxidized state. Finally component PA becomes reduced by the thioredoxin system to start a new catalytic cycle of reductive deamination. This chain is Glycine/sarcosine/betaine reductase complex component A1 (grdA1), found in Peptoclostridium acidaminophilum (Eubacterium acidaminophilum).